A 1067-amino-acid polypeptide reads, in one-letter code: Lon protease homolog, mitochondrial (1067 aa).

A mitochondrion-targeting transit peptide spans 1–36 (MITRLSGACLRRSGAKRNWPREHLVHRSLLASFSTT). Positions 55–82 (KSKEPKDNKPLDNKNDPKKTHNEDESHT) are enriched in basic and acidic residues. Disordered stretches follow at residues 55-142 (KSKE…MPLN) and 262-314 (IPPK…ESTP). Over residues 128–139 (FELGGEENEDEM) the composition is skewed to acidic residues. The Lon N-terminal domain occupies 162–425 (LLALPIARRP…KALYVLKKEL (264 aa)). Residues 293-311 (VKSDLKQDNGKEEPEKEVE) show a composition bias toward basic and acidic residues. 578–585 (GPPGVGKT) lines the ATP pocket. The disordered stretch occupies residues 791-820 (NSKEKSTGKSGKKTSPQSSEDAANKEASSV). The region spanning 854 to 1040 (TTPPGVVMGL…DDVFKRVFSN (187 aa)) is the Lon proteolytic domain. Active-site residues include Ser-946 and Lys-989.

This sequence belongs to the peptidase S16 family. In terms of assembly, homohexamer or homoheptamer. Organized in a ring with a central cavity.

The protein localises to the mitochondrion matrix. The catalysed reaction is Hydrolysis of proteins in presence of ATP.. Functionally, ATP-dependent serine protease that mediates the selective degradation of misfolded, unassembled or oxidatively damaged polypeptides as well as certain short-lived regulatory proteins in the mitochondrial matrix. May also have a chaperone function in the assembly of inner membrane protein complexes. Participates in the regulation of mitochondrial gene expression and in the maintenance of the integrity of the mitochondrial genome. Binds to mitochondrial DNA in a site-specific manner. In Schizosaccharomyces pombe (strain 972 / ATCC 24843) (Fission yeast), this protein is Lon protease homolog, mitochondrial (pim1).